A 405-amino-acid polypeptide reads, in one-letter code: Glucose-1-phosphate adenylyltransferase 1 (405 aa).

Alpha-D-glucose 1-phosphate is bound by residues Y96, G161, 176-177 (EK), and S194.

Belongs to the bacterial/plant glucose-1-phosphate adenylyltransferase family. Homotetramer.

The catalysed reaction is alpha-D-glucose 1-phosphate + ATP + H(+) = ADP-alpha-D-glucose + diphosphate. It functions in the pathway glycan biosynthesis; glycogen biosynthesis. Functionally, involved in the biosynthesis of ADP-glucose, a building block required for the elongation reactions to produce glycogen. Catalyzes the reaction between ATP and alpha-D-glucose 1-phosphate (G1P) to produce pyrophosphate and ADP-Glc. This is Glucose-1-phosphate adenylyltransferase 1 from Vibrio vulnificus (strain CMCP6).